A 272-amino-acid polypeptide reads, in one-letter code: 1,4-dihydroxy-2-naphthoyl-CoA synthase (272 aa).

Residues Arg33, 72–76, Tyr84, 116–120, Thr142, Ser148, Tyr245, and Lys260 contribute to the substrate site; these read SGGDQ and YAIGG. Position 141 to 143 (141 to 143) interacts with hydrogencarbonate; it reads QTG. Positions 253-264 are enriched in basic and acidic residues; the sequence is GRDAFKEKRDPD. Residues 253–272 are disordered; that stretch reads GRDAFKEKRDPDFDQFPKFP.

This sequence belongs to the enoyl-CoA hydratase/isomerase family. MenB subfamily. Requires hydrogencarbonate as cofactor.

The enzyme catalyses 2-succinylbenzoyl-CoA + H(+) = 1,4-dihydroxy-2-naphthoyl-CoA + H2O. It participates in quinol/quinone metabolism; 1,4-dihydroxy-2-naphthoate biosynthesis; 1,4-dihydroxy-2-naphthoate from chorismate: step 6/7. It functions in the pathway quinol/quinone metabolism; menaquinone biosynthesis. Its function is as follows. Converts o-succinylbenzoyl-CoA (OSB-CoA) to 1,4-dihydroxy-2-naphthoyl-CoA (DHNA-CoA). In Staphylococcus saprophyticus subsp. saprophyticus (strain ATCC 15305 / DSM 20229 / NCIMB 8711 / NCTC 7292 / S-41), this protein is 1,4-dihydroxy-2-naphthoyl-CoA synthase.